We begin with the raw amino-acid sequence, 35 residues long: Photosystem II reaction center protein M (35 aa).

A helical membrane pass occupies residues 5–25 (ILAFIATALFILVPTAFLLII).

The protein belongs to the PsbM family. In terms of assembly, PSII is composed of 1 copy each of membrane proteins PsbA, PsbB, PsbC, PsbD, PsbE, PsbF, PsbH, PsbI, PsbJ, PsbK, PsbL, PsbM, PsbT, PsbX, PsbY, PsbZ, Psb30/Ycf12, at least 3 peripheral proteins of the oxygen-evolving complex and a large number of cofactors. It forms dimeric complexes.

Its subcellular location is the plastid. It is found in the chloroplast thylakoid membrane. One of the components of the core complex of photosystem II (PSII). PSII is a light-driven water:plastoquinone oxidoreductase that uses light energy to abstract electrons from H(2)O, generating O(2) and a proton gradient subsequently used for ATP formation. It consists of a core antenna complex that captures photons, and an electron transfer chain that converts photonic excitation into a charge separation. This subunit is found at the monomer-monomer interface. The chain is Photosystem II reaction center protein M from Panax quinquefolius (American ginseng).